A 554-amino-acid chain; its full sequence is Glucose-6-phosphate isomerase (554 aa).

Catalysis depends on Glu-359, which acts as the Proton donor. Residues His-390 and Lys-518 contribute to the active site.

Belongs to the GPI family.

Its subcellular location is the cytoplasm. The catalysed reaction is alpha-D-glucose 6-phosphate = beta-D-fructose 6-phosphate. The protein operates within carbohydrate biosynthesis; gluconeogenesis. It functions in the pathway carbohydrate degradation; glycolysis; D-glyceraldehyde 3-phosphate and glycerone phosphate from D-glucose: step 2/4. Catalyzes the reversible isomerization of glucose-6-phosphate to fructose-6-phosphate. This is Glucose-6-phosphate isomerase from Pseudomonas fluorescens.